The following is a 132-amino-acid chain: Outer membrane protein RomA (132 aa).

The protein to M.tuberculosis Rv0906.

The protein resides in the cell outer membrane. The chain is Outer membrane protein RomA (romA) from Klebsiella pneumoniae.